A 327-amino-acid chain; its full sequence is Fructose-1,6-bisphosphatase class 1 (327 aa).

Glutamate 84, aspartate 103, leucine 105, and aspartate 106 together coordinate Mg(2+). Substrate contacts are provided by residues 106 to 109, asparagine 197, and lysine 263; that span reads DGSS. Mg(2+) is bound at residue glutamate 269.

Belongs to the FBPase class 1 family. As to quaternary structure, homotetramer. Requires Mg(2+) as cofactor.

The protein localises to the cytoplasm. The catalysed reaction is beta-D-fructose 1,6-bisphosphate + H2O = beta-D-fructose 6-phosphate + phosphate. The protein operates within carbohydrate biosynthesis; gluconeogenesis. This chain is Fructose-1,6-bisphosphatase class 1, found in Idiomarina loihiensis (strain ATCC BAA-735 / DSM 15497 / L2-TR).